The chain runs to 261 residues: 5'-nucleotidase SurE (261 aa).

The a divalent metal cation site is built by Asp8, Asp9, Ser43, and Asn96.

The protein belongs to the SurE nucleotidase family. The cofactor is a divalent metal cation.

It localises to the cytoplasm. The enzyme catalyses a ribonucleoside 5'-phosphate + H2O = a ribonucleoside + phosphate. Functionally, nucleotidase that shows phosphatase activity on nucleoside 5'-monophosphates. The sequence is that of 5'-nucleotidase SurE from Roseobacter denitrificans (strain ATCC 33942 / OCh 114) (Erythrobacter sp. (strain OCh 114)).